The primary structure comprises 491 residues: Calcium/calmodulin-dependent protein kinase type II delta 1 chain (491 aa).

Positions 13-271 constitute a Protein kinase domain; the sequence is YQLYEELGKG…AAEALKHPWI (259 aa). Residues 19-27 and Lys42 contribute to the ATP site; that span reads LGKGAFSVV. Catalysis depends on Asp135, which acts as the Proton acceptor. A Phosphothreonine modification is found at Thr286. A Phosphoserine modification is found at Ser314. Residues 315–354 are disordered; that stretch reads SKNPYKKPDGVKEPQTTVIHNPTDGNKESSESTNTTIEDE. Positions 328–338 are enriched in polar residues; it reads PQTTVIHNPTD. Phosphothreonine is present on Thr350.

The protein belongs to the protein kinase superfamily. CAMK Ser/Thr protein kinase family. CaMK subfamily. CAMK2 is composed of four different chains: alpha, beta, gamma, and delta. The different isoforms assemble into homo- or heteromultimeric holoenzymes composed of 8 to 12 subunits. In terms of tissue distribution, first detected at the 18-somite stage where expression is restricted to somite boundaries. At 24 hpf, expression is elevated in epidermal tissue and in the hatching gland. After 24 hpf, expression dimishes, but persists at low levels along the dorsal trunk. At 48 hpf, expression is restricted at a low level to the forebrain. At 72 hpf, weak expression reappears along the entire dorsal trunk in discrete cell bodies.

It catalyses the reaction L-seryl-[protein] + ATP = O-phospho-L-seryl-[protein] + ADP + H(+). It carries out the reaction L-threonyl-[protein] + ATP = O-phospho-L-threonyl-[protein] + ADP + H(+). With respect to regulation, autophosphorylation of CAMK2 plays an important role in the regulation of the kinase activity. Its function is as follows. CaM-kinase II (CAMK2) is a prominent kinase in the central nervous system. The protein is Calcium/calmodulin-dependent protein kinase type II delta 1 chain of Danio rerio (Zebrafish).